Here is a 555-residue protein sequence, read N- to C-terminus: Pentatricopeptide repeat-containing protein At2g44880 (555 aa).

PPR repeat units lie at residues 41 to 75, 77 to 111, 112 to 142, 143 to 173, 175 to 205, 206 to 240, 241 to 267, 273 to 307, 308 to 342, 343 to 370, 373 to 407, and 408 to 438; these read DSFL…TCFA, DNFT…GFCA, DMYV…MPHR, SEVS…MPHV, DVVI…MTHK, TVIT…NLVS, WNTM…MQAT, DDVT…KLDK, KVKV…QVAS, WNAM…MIEE, DEIT…GLNA, and KIEH…MPFE. The type E motif stretch occupies residues 443–518; sequence ILSSFLSACG…EVGCSLIEIN (76 aa). Residues 519–549 are type E(+) motif; it reads YIVSEFISGDTTHPHRRSIHLVLGDLLMHMN.

The protein belongs to the PPR family. PCMP-E subfamily.

The sequence is that of Pentatricopeptide repeat-containing protein At2g44880 (PCMP-E9) from Arabidopsis thaliana (Mouse-ear cress).